The chain runs to 710 residues: DNA polymerase epsilon subunit B (710 aa).

A disordered region spans residues 116-167 (FLKRPNSPTDTEITTLSQGSATSVVNPDSHSPMMLEEGSPINSDSEPISEHE). The span at 121 to 144 (NSPTDTEITTLSQGSATSVVNPDS) shows a compositional bias: polar residues.

The protein belongs to the DNA polymerase epsilon subunit B family. As to quaternary structure, heterotetramer. Consists of four subunits: POL2, DPB2, DPB3 and DPB4.

Its subcellular location is the nucleus. As accessory component of the DNA polymerase epsilon (DNA polymerase II) participates in chromosomal DNA replication. The sequence is that of DNA polymerase epsilon subunit B (DPB2) from Kluyveromyces lactis (strain ATCC 8585 / CBS 2359 / DSM 70799 / NBRC 1267 / NRRL Y-1140 / WM37) (Yeast).